Consider the following 389-residue polypeptide: Glutamate 5-kinase (389 aa).

Lys-16 is an ATP binding site. 3 residues coordinate substrate: Ser-56, Asp-143, and Asn-155. Residue 175–176 (SD) participates in ATP binding. The region spanning 281-358 (AGELHVDEGA…AEIEAILGYA (78 aa)) is the PUA domain.

The protein belongs to the glutamate 5-kinase family.

It localises to the cytoplasm. The enzyme catalyses L-glutamate + ATP = L-glutamyl 5-phosphate + ADP. Its pathway is amino-acid biosynthesis; L-proline biosynthesis; L-glutamate 5-semialdehyde from L-glutamate: step 1/2. Its function is as follows. Catalyzes the transfer of a phosphate group to glutamate to form L-glutamate 5-phosphate. This is Glutamate 5-kinase from Rhizobium rhizogenes (strain K84 / ATCC BAA-868) (Agrobacterium radiobacter).